The following is a 766-amino-acid chain: Sucrose synthase (766 aa).

Residues 220-698 (MVFNVVILSV…GLLRIKERYT (479 aa)) are GT-B glycosyltransferase.

This sequence belongs to the glycosyltransferase 1 family. Plant sucrose synthase subfamily. In terms of tissue distribution, expressed most predominantly in tap root.

It carries out the reaction an NDP-alpha-D-glucose + D-fructose = a ribonucleoside 5'-diphosphate + sucrose + H(+). Its function is as follows. Sucrose-cleaving enzyme that provides UDP-glucose and fructose for various metabolic pathways. The polypeptide is Sucrose synthase (SS1) (Beta vulgaris (Sugar beet)).